The following is a 152-amino-acid chain: Sec-independent protein translocase protein TatB (152 aa).

The helical transmembrane segment at 1–21 (MLDVGFGELFCFGIIALLVLG) threads the bilayer.

The protein belongs to the TatB family. In terms of assembly, the Tat system comprises two distinct complexes: a TatABC complex, containing multiple copies of TatA, TatB and TatC subunits, and a separate TatA complex, containing only TatA subunits. Substrates initially bind to the TatABC complex, which probably triggers association of the separate TatA complex to form the active translocon.

It localises to the cell inner membrane. Functionally, part of the twin-arginine translocation (Tat) system that transports large folded proteins containing a characteristic twin-arginine motif in their signal peptide across membranes. Together with TatC, TatB is part of a receptor directly interacting with Tat signal peptides. TatB may form an oligomeric binding site that transiently accommodates folded Tat precursor proteins before their translocation. The protein is Sec-independent protein translocase protein TatB of Acinetobacter baylyi (strain ATCC 33305 / BD413 / ADP1).